We begin with the raw amino-acid sequence, 314 residues long: tRNA uridine(34) hydroxylase (314 aa).

Residues 140–234 (ARDDVILIDT…YLEETPPDES (95 aa)) form the Rhodanese domain. The Cysteine persulfide intermediate role is filled by Cys-194.

It belongs to the TrhO family.

The catalysed reaction is uridine(34) in tRNA + AH2 + O2 = 5-hydroxyuridine(34) in tRNA + A + H2O. Functionally, catalyzes oxygen-dependent 5-hydroxyuridine (ho5U) modification at position 34 in tRNAs. The protein is tRNA uridine(34) hydroxylase of Acinetobacter baumannii (strain SDF).